A 397-amino-acid polypeptide reads, in one-letter code: Torsin-3A (397 aa).

A signal peptide spans 1–25; the sequence is MLRGPWRQLWLFFLLLLPGAPEPRG. Asparagine 122 carries N-linked (GlcNAc...) asparagine glycosylation. Residue 167 to 174 coordinates ATP; sequence GWSGTGKN.

The protein belongs to the ClpA/ClpB family. Torsin subfamily. As to quaternary structure, may not form homohexamers. In terms of processing, N-glycosylated. In terms of tissue distribution, ubiquitously expressed. Highest expression in stomach, salivary glands and lymph nodes. Isoform 2 is expressed in placenta.

It is found in the cytoplasm. It localises to the endoplasmic reticulum lumen. In Homo sapiens (Human), this protein is Torsin-3A (TOR3A).